The sequence spans 382 residues: Galactokinase (382 aa).

Substrate is bound at residue 34-37 (EHTD). Position 124–130 (124–130 (GAGLSSS)) interacts with ATP. Mg(2+) is bound by residues serine 130 and glutamate 162. The active-site Proton acceptor is aspartate 174. Tyrosine 223 contacts substrate.

This sequence belongs to the GHMP kinase family. GalK subfamily.

It localises to the cytoplasm. The enzyme catalyses alpha-D-galactose + ATP = alpha-D-galactose 1-phosphate + ADP + H(+). The protein operates within carbohydrate metabolism; galactose metabolism. In terms of biological role, catalyzes the transfer of the gamma-phosphate of ATP to D-galactose to form alpha-D-galactose-1-phosphate (Gal-1-P). The sequence is that of Galactokinase from Escherichia coli O1:K1 / APEC.